A 155-amino-acid chain; its full sequence is Ribonuclease H (155 aa).

In terms of domain architecture, RNase H type-1 spans Leu5–Gln146. Positions 14, 52, 74, and 138 each coordinate Mg(2+).

The protein belongs to the RNase H family. Monomer. Mg(2+) serves as cofactor.

The protein localises to the cytoplasm. The catalysed reaction is Endonucleolytic cleavage to 5'-phosphomonoester.. Endonuclease that specifically degrades the RNA of RNA-DNA hybrids. The protein is Ribonuclease H of Nitrosospira multiformis (strain ATCC 25196 / NCIMB 11849 / C 71).